Here is a 534-residue protein sequence, read N- to C-terminus: Arginine--tRNA ligase (534 aa).

Positions 120-130 (ANPTGFLHLGH) match the 'HIGH' region motif.

Belongs to the class-I aminoacyl-tRNA synthetase family. In terms of assembly, monomer.

The protein localises to the cytoplasm. It carries out the reaction tRNA(Arg) + L-arginine + ATP = L-arginyl-tRNA(Arg) + AMP + diphosphate. The protein is Arginine--tRNA ligase of Mesomycoplasma hyopneumoniae (strain 232) (Mycoplasma hyopneumoniae).